A 199-amino-acid polypeptide reads, in one-letter code: Probable GTP-binding protein EngB (199 aa).

Positions Asp28 to Leu199 constitute an EngB-type G domain. GTP contacts are provided by residues Gly36–Ser43, Gly63–Leu67, Asp81–Gly84, Thr148–Asp151, and Phe180–Ser182. Residues Ser43 and Thr65 each coordinate Mg(2+).

This sequence belongs to the TRAFAC class TrmE-Era-EngA-EngB-Septin-like GTPase superfamily. EngB GTPase family. It depends on Mg(2+) as a cofactor.

Functionally, necessary for normal cell division and for the maintenance of normal septation. This chain is Probable GTP-binding protein EngB, found in Streptococcus thermophilus (strain CNRZ 1066).